A 324-amino-acid polypeptide reads, in one-letter code: Protoheme IX farnesyltransferase (324 aa).

A run of 9 helical transmembrane segments spans residues 31-51 (LILLFLITTAAAMWVASSGQV), 56-76 (FLTTLLAGACAAGSANTINCI), 105-125 (VFAASLALTAFFLLAFGANLL), 126-146 (SACLAMAGIAVYIGVYTYWLK), 153-173 (IVIGGAAGAIPPLVGWAAVTG), 181-201 (VLFAIIFIWTPPHFWPLAMMI), 214-234 (PVVNGMATTANQTFIYTLLLL), 238-258 (LLLVYPLKVSGALYASIAIVL), and 285-305 (FSILYMMLLCAGMGVDSLPWT).

It belongs to the UbiA prenyltransferase family. Protoheme IX farnesyltransferase subfamily.

The protein localises to the cell inner membrane. It carries out the reaction heme b + (2E,6E)-farnesyl diphosphate + H2O = Fe(II)-heme o + diphosphate. It functions in the pathway porphyrin-containing compound metabolism; heme O biosynthesis; heme O from protoheme: step 1/1. Converts heme B (protoheme IX) to heme O by substitution of the vinyl group on carbon 2 of heme B porphyrin ring with a hydroxyethyl farnesyl side group. This Acaryochloris marina (strain MBIC 11017) protein is Protoheme IX farnesyltransferase.